An 87-amino-acid chain; its full sequence is MEEILRNARKERTGKVVSNKMNKSITVAVERKVKHAKYGKFIHKTTKLMAHDENQECGIGDTVRVMETRPLSKLKRWRLVEVIEKAK.

It belongs to the universal ribosomal protein uS17 family. In terms of assembly, part of the 30S ribosomal subunit.

In terms of biological role, one of the primary rRNA binding proteins, it binds specifically to the 5'-end of 16S ribosomal RNA. This Cytophaga hutchinsonii (strain ATCC 33406 / DSM 1761 / CIP 103989 / NBRC 15051 / NCIMB 9469 / D465) protein is Small ribosomal subunit protein uS17.